Here is a 313-residue protein sequence, read N- to C-terminus: tRNA dimethylallyltransferase (313 aa).

Residue 11-18 (GPTACGKT) participates in ATP binding. 13-18 (TACGKT) serves as a coordination point for substrate. Interaction with substrate tRNA regions lie at residues 36 to 39 (DSAL), 160 to 164 (QRIER), and 243 to 248 (RCVGYR).

This sequence belongs to the IPP transferase family. As to quaternary structure, monomer. Mg(2+) is required as a cofactor.

It catalyses the reaction adenosine(37) in tRNA + dimethylallyl diphosphate = N(6)-dimethylallyladenosine(37) in tRNA + diphosphate. Functionally, catalyzes the transfer of a dimethylallyl group onto the adenine at position 37 in tRNAs that read codons beginning with uridine, leading to the formation of N6-(dimethylallyl)adenosine (i(6)A). The sequence is that of tRNA dimethylallyltransferase from Neisseria meningitidis serogroup C (strain 053442).